The primary structure comprises 344 residues: Ribosomal RNA large subunit methyltransferase Cfr (344 aa).

Glu-90 (proton acceptor) is an active-site residue. A Radical SAM core domain is found at 97–330 (KQGWESFCIS…ATVRTQFGSE (234 aa)). Residues Cys-104 and Cys-335 are joined by a disulfide bond. Positions 111, 115, and 118 each coordinate [4Fe-4S] cluster. S-adenosyl-L-methionine-binding positions include 157–158 (GE), Ser-188, 211–213 (SLH), and Asn-292. The S-methylcysteine intermediate role is filled by Cys-335.

Belongs to the radical SAM superfamily. RlmN family. Cfr subfamily. [4Fe-4S] cluster serves as cofactor.

Its subcellular location is the cytoplasm. The enzyme catalyses adenosine(2503) in 23S rRNA + 2 reduced [2Fe-2S]-[ferredoxin] + 2 S-adenosyl-L-methionine = 8-methyladenosine(2503) in 23S rRNA + 5'-deoxyadenosine + L-methionine + 2 oxidized [2Fe-2S]-[ferredoxin] + S-adenosyl-L-homocysteine. Specifically methylates position 8 of adenine 2503 in 23S rRNA. Confers resistance to some classes of antibiotics. The protein is Ribosomal RNA large subunit methyltransferase Cfr of Clostridium botulinum (strain Okra / Type B1).